An 898-amino-acid polypeptide reads, in one-letter code: Probable LRR receptor-like serine/threonine-protein kinase At4g20450 (898 aa).

The first 24 residues, 1–24, serve as a signal peptide directing secretion; the sequence is MEGIHKLIFLALIWIFLITNIVDA. Over 25-535 the chain is Extracellular; that stretch reads QDQQGFISLD…TGPGNNKKKL (511 aa). N-linked (GlcNAc...) asparagine glycans are attached at residues Asn40, Asn52, Asn98, Asn247, Asn253, Asn420, Asn443, Asn465, Asn484, and Asn489. 3 LRR repeats span residues 455–477, 479–501, and 505–526; these read QLQK…LAKM, LLTF…LLNM, and GLIT…ESET. A helical membrane pass occupies residues 536-556; it reads LVPILASAASVGIIIAVLLLV. Topologically, residues 557–898 are cytoplasmic; sequence NILLLRKKKP…FGPEHIPDAR (342 aa). Thr582 is subject to Phosphothreonine. One can recognise a Protein kinase domain in the interval 591 to 864; sequence NNFERPLGEG…QVANELQECL (274 aa). Residues 597–605 and Lys619 contribute to the ATP site; that span reads LGEGGFGVV. Tyr664 is modified (phosphotyrosine). Asp716 acts as the Proton acceptor in catalysis. Position 750 is a phosphoserine (Ser750). Thr751 is modified (phosphothreonine). Tyr764 is modified (phosphotyrosine). A disordered region spans residues 864-898; the sequence is LLTENSRKGGRHDVDSKSSLEQSTSFGPEHIPDAR. Positions 868-881 are enriched in basic and acidic residues; that stretch reads NSRKGGRHDVDSKS.

Belongs to the protein kinase superfamily. Ser/Thr protein kinase family.

It localises to the membrane. It carries out the reaction L-seryl-[protein] + ATP = O-phospho-L-seryl-[protein] + ADP + H(+). The catalysed reaction is L-threonyl-[protein] + ATP = O-phospho-L-threonyl-[protein] + ADP + H(+). The polypeptide is Probable LRR receptor-like serine/threonine-protein kinase At4g20450 (Arabidopsis thaliana (Mouse-ear cress)).